Consider the following 446-residue polypeptide: tRNA-2-methylthio-N(6)-dimethylallyladenosine synthase (446 aa).

The MTTase N-terminal domain occupies 5 to 121 (KYLYVETFGC…LPEIVRAAER (117 aa)). Cys14, Cys50, Cys84, Cys159, Cys163, and Cys166 together coordinate [4Fe-4S] cluster. A Radical SAM core domain is found at 145–375 (GEGGVTRFVT…QTLQQQMKRE (231 aa)). A TRAM domain is found at 378–440 (ISFVGTRQLV…QNSLLGEIVT (63 aa)).

Belongs to the methylthiotransferase family. MiaB subfamily. In terms of assembly, monomer. The cofactor is [4Fe-4S] cluster.

Its subcellular location is the cytoplasm. It carries out the reaction N(6)-dimethylallyladenosine(37) in tRNA + (sulfur carrier)-SH + AH2 + 2 S-adenosyl-L-methionine = 2-methylsulfanyl-N(6)-dimethylallyladenosine(37) in tRNA + (sulfur carrier)-H + 5'-deoxyadenosine + L-methionine + A + S-adenosyl-L-homocysteine + 2 H(+). Catalyzes the methylthiolation of N6-(dimethylallyl)adenosine (i(6)A), leading to the formation of 2-methylthio-N6-(dimethylallyl)adenosine (ms(2)i(6)A) at position 37 in tRNAs that read codons beginning with uridine. This Geobacter sulfurreducens (strain ATCC 51573 / DSM 12127 / PCA) protein is tRNA-2-methylthio-N(6)-dimethylallyladenosine synthase.